Consider the following 75-residue polypeptide: Dermaseptin-S11 (75 aa).

Residues 1 to 22 form the signal peptide; sequence MAFLKKSLFLVLFLGMVSLSIC. The propeptide occupies 23-45; that stretch reads EEEKRENEDEEEQEDDEQSEEKR. The segment at 25 to 44 is disordered; sequence EKRENEDEEEQEDDEQSEEK. Residues 30-41 are compositionally biased toward acidic residues; it reads EDEEEQEDDEQS.

The protein belongs to the frog skin active peptide (FSAP) family. Dermaseptin subfamily. In terms of tissue distribution, expressed by the skin glands.

The protein resides in the secreted. It is found in the target cell membrane. Its function is as follows. Antimicrobial peptide with activity against Gram-positive and Gram-negative bacteria, and fungi. Has hemolytic activity. This chain is Dermaseptin-S11, found in Phyllomedusa sauvagei (Sauvage's leaf frog).